The chain runs to 119 residues: Cytochrome c55X (119 aa).

A signal peptide spans 1–20 (MNAPPDFRRAASHALWLALA). 3 residues coordinate heme c: Cys-51, Cys-54, and His-55.

Post-translationally, binds 1 heme c group covalently per subunit.

Its subcellular location is the periplasm. Monoheme c-type cytochrome. The protein is Cytochrome c55X (nirC) of Pseudomonas aeruginosa (strain ATCC 15692 / DSM 22644 / CIP 104116 / JCM 14847 / LMG 12228 / 1C / PRS 101 / PAO1).